A 929-amino-acid chain; its full sequence is von Willebrand factor C and EGF domain-containing protein (929 aa).

A signal peptide spans 1–21 (MWARLLLHVAYILIPLLGSSA). Residues 70–98 (LCSFGCGSGICIAPNVCSCQDGEQGATCP) form the EGF-like 1 domain. An EGF-like 2; calcium-binding domain is found at 142-180 (DIDECLSSSCEGHCVNTEGGFVCECGPGMQLSADRHSCQ). 9 disulfides stabilise this stretch: Cys-146–Cys-155, Cys-151–Cys-164, Cys-166–Cys-179, Cys-185–Cys-194, Cys-190–Cys-203, Cys-205–Cys-218, Cys-224–Cys-237, Cys-233–Cys-246, and Cys-248–Cys-261. The EGF-like 3; calcium-binding domain occupies 181–219 (DTDECLGTPCQQRCKNSIGSYKCSCRAGFHLHGNRHSCI). The region spanning 220–262 (DVNECRRPQERRVCHHTCHNTVGSFLCTCRPGFRLRSDRVSCE) is the EGF-like 4; calcium-binding domain. Disordered stretches follow at residues 291 to 317 (AGRP…RTIS) and 339 to 374 (PSSS…LGAG). Residues 339–353 (PSSSPLGTLGPPSLL) show a composition bias toward low complexity. VWFC domains lie at 376-433 (SSCW…PSCT), 433-494 (TGCF…GRCY), 491-552 (GRCY…FTCR), 558-618 (TGCS…PDCS), 619-677 (AGCT…PVCH), and 677-762 (HDCN…VNCS). Residues Asn-454 and Asn-464 are each glycosylated (N-linked (GlcNAc...) asparagine). A disordered region spans residues 731–774 (PLEEKQQPSPHGELAKAARNARGDTEVPVNCSSCPGPPSASPTR). Over residues 743–755 (ELAKAARNARGDT) the composition is skewed to basic and acidic residues. N-linked (GlcNAc...) asparagine glycosylation occurs at Asn-787. Positions 791–807 (IQSASPSPPIAQTSSSP) are enriched in polar residues. Disordered stretches follow at residues 791–861 (IQSA…SSTF) and 879–929 (AETP…NSTI). Residues 889–903 (LSETLTTSSSSQRLS) show a composition bias toward low complexity.

The protein localises to the secreted. Functionally, may be a regulatory element in the beta-catenin signaling pathway and a target for chemoprevention of hapatocellular carcinoma. The sequence is that of von Willebrand factor C and EGF domain-containing protein (Vwce) from Mus musculus (Mouse).